We begin with the raw amino-acid sequence, 51 residues long: 2,3,4,5-tetrahydropyridine-2,6-dicarboxylate N-succinyltransferase (51 aa).

Belongs to the transferase hexapeptide repeat family. As to quaternary structure, homotrimer.

The protein resides in the cytoplasm. It carries out the reaction (S)-2,3,4,5-tetrahydrodipicolinate + succinyl-CoA + H2O = (S)-2-succinylamino-6-oxoheptanedioate + CoA. It functions in the pathway amino-acid biosynthesis; L-lysine biosynthesis via DAP pathway; LL-2,6-diaminopimelate from (S)-tetrahydrodipicolinate (succinylase route): step 1/3. The polypeptide is 2,3,4,5-tetrahydropyridine-2,6-dicarboxylate N-succinyltransferase (dapD) (Klebsiella oxytoca).